The sequence spans 488 residues: Cysteine--tRNA ligase (488 aa).

A Zn(2+)-binding site is contributed by Cys-28. A 'HIGH' region motif is present at residues 30-40 (PTVYDDAHLGH). Zn(2+) is bound by residues Cys-209, His-239, and Glu-243. The 'KMSKS' region motif lies at 271–275 (KMSKS). Lys-274 lines the ATP pocket.

The protein belongs to the class-I aminoacyl-tRNA synthetase family. In terms of assembly, monomer. The cofactor is Zn(2+).

Its subcellular location is the cytoplasm. The enzyme catalyses tRNA(Cys) + L-cysteine + ATP = L-cysteinyl-tRNA(Cys) + AMP + diphosphate. In Helicobacter hepaticus (strain ATCC 51449 / 3B1), this protein is Cysteine--tRNA ligase.